The following is a 435-amino-acid chain: MNQGEIVYQDDDDYYDESEIYDNYEEGAEFIEVNGQLVPHNPNLQAQQNRPGTSSMIQQHNRSMEVNQGLVKDEPIDTSSHRVYVPPPRPVQRKLFQPGPSTPGSSQYTVRNLSNLSGSPSMYDRQPASLPRTVQPMGLEMGNSEQRKVYIDMKDHVSHIRLKTKKKVFAPGQRKPCNCTKSQCLKLYCDCFANGEFCRDCNCKDCHNNIEYDSQRSKAIRQSLERNPNAFKPKIGIARGGITDIERLHQKGCHCKKSGCLKNYCECYEAKVPCTDRCKCKGCQNTETYRMTRYKNSGGAVSNTNALMSLTNASSTATPDSGPGSVVTDEHGDDYEDMLLSHKPKVEMDPRRFPWYYMTDEVVEAATMCMVAQAEEALNYEKVQTEDEKLINMEKLVLREFGRCLEQMITNTTELTQDLDAAPTDDIPGPSTSTS.

The segment at 73–136 (DEPIDTSSHR…PASLPRTVQP (64 aa)) is disordered. Positions 102 to 120 (TPGSSQYTVRNLSNLSGSP) are enriched in polar residues. The CRC domain maps to 173–288 (QRKPCNCTKS…KCKGCQNTET (116 aa)). The tract at residues 175–188 (KPCNCTKSQCLKLY) is DNA-binding. 9 residues coordinate Zn(2+): cysteine 177, cysteine 179, cysteine 184, cysteine 189, cysteine 191, cysteine 198, cysteine 201, cysteine 203, and cysteine 206. Residues 235–250 (IGIARGGITDIERLHQ) form a linker region. The Zn(2+) site is built by cysteine 253, cysteine 255, cysteine 260, cysteine 265, cysteine 267, cysteine 274, cysteine 278, cysteine 280, and cysteine 283. The interval 253–266 (CHCKKSGCLKNYCE) is DNA-binding. The disordered stretch occupies residues 415–435 (LTQDLDAAPTDDIPGPSTSTS).

This sequence belongs to the lin-54 family. In terms of assembly, component of the DRM complex, at least composed of lin-9, lin-35, lin-37, lin-52, lin-53, lin-54- dpl-1 and efl-1.

The protein resides in the nucleus. Its subcellular location is the chromosome. Synthetic multivulva class B (synMuvB) protein. SynMuvB proteins are required to repress the induction of vulval development by Ras signaling and probably act by forming the multiprotein DRM complex that repress transcription. The chain is Protein lin-54 from Caenorhabditis elegans.